Reading from the N-terminus, the 1166-residue chain is ATP-dependent helicase/deoxyribonuclease subunit B (1166 aa).

Residues 1–278 (MGAEFLVGRS…LNLDITYKEL (278 aa)) form the UvrD-like helicase ATP-binding domain. Ser10, Gly11, Lys14, Thr15, Lys16, Thr236, and Arg283 together coordinate ATP. In terms of domain architecture, UvrD-like helicase C-terminal spans 281–586 (TERHTKTPEL…TFSLIPPALD (306 aa)). [4Fe-4S] cluster is bound by residues Cys801, Cys1121, Cys1124, and Cys1130.

It belongs to the helicase family. AddB/RexB type 1 subfamily. As to quaternary structure, heterodimer of AddA and AddB. At low magnesium concentrations there is no nuclease activity, but helicase activity is unaffected. is required as a cofactor. It depends on Mg(2+) as a cofactor. The cofactor is [4Fe-4S] cluster.

Its function is as follows. The heterodimer acts both as a highly processive, ATP-dependent DNA helicase and as an ATP-dependent single-stranded exonuclease, acting in both directions. Recognizes the B.subtilis Chi site (5'-AGCGG-3') which transforms the enzyme from a helicase which degrades both DNA strands to one with only 5' to 3' exonuclease activity. This generates a double-stranded DNA with a protruding 3'-terminated single-stranded tail suitable for the initiation of homologous recombination (Chi fragment). The AddB nuclease domain is not required for Chi fragment generation but for recognition of the Chi site; this subunit has 5' -&gt; 3' nuclease activity but no helicase activity. The helicase activity of isolated AddA acts on 3'-tailed substrate and requires AddB to bind to blunt-ended DNA. RecA thread formation during DNA double-strand break repair requires RecJ or AddAB. This chain is ATP-dependent helicase/deoxyribonuclease subunit B, found in Bacillus subtilis (strain 168).